The primary structure comprises 349 residues: Phosphoribosylformylglycinamidine cyclo-ligase (349 aa).

It belongs to the AIR synthase family.

It localises to the cytoplasm. The enzyme catalyses 2-formamido-N(1)-(5-O-phospho-beta-D-ribosyl)acetamidine + ATP = 5-amino-1-(5-phospho-beta-D-ribosyl)imidazole + ADP + phosphate + H(+). It functions in the pathway purine metabolism; IMP biosynthesis via de novo pathway; 5-amino-1-(5-phospho-D-ribosyl)imidazole from N(2)-formyl-N(1)-(5-phospho-D-ribosyl)glycinamide: step 2/2. In Methanococcus maripaludis (strain C5 / ATCC BAA-1333), this protein is Phosphoribosylformylglycinamidine cyclo-ligase.